We begin with the raw amino-acid sequence, 299 residues long: Probable lipid kinase YegS-like (299 aa).

One can recognise a DAGKc domain in the interval 2-133 (SRSAGSFLIL…IDIAHVNDKT (132 aa)). ATP-binding positions include threonine 40, 66 to 72 (GDGTINE), and threonine 95. Residues leucine 215, aspartate 218, and leucine 220 each contribute to the Mg(2+) site. Glutamate 271 acts as the Proton acceptor in catalysis.

This sequence belongs to the diacylglycerol/lipid kinase family. YegS lipid kinase subfamily. The cofactor is Mg(2+). Ca(2+) serves as cofactor.

Its subcellular location is the cytoplasm. In terms of biological role, probably phosphorylates lipids; the in vivo substrate is unknown. The polypeptide is Probable lipid kinase YegS-like (Cronobacter sakazakii (strain ATCC BAA-894) (Enterobacter sakazakii)).